We begin with the raw amino-acid sequence, 176 residues long: Ribosome maturation factor RimM (176 aa).

The region spanning 100-173 is the PRC barrel domain; sequence PEEYYDYQLI…RLRIDPPPGL (74 aa).

Belongs to the RimM family. In terms of assembly, binds ribosomal protein uS19.

It is found in the cytoplasm. Functionally, an accessory protein needed during the final step in the assembly of 30S ribosomal subunit, possibly for assembly of the head region. Essential for efficient processing of 16S rRNA. May be needed both before and after RbfA during the maturation of 16S rRNA. It has affinity for free ribosomal 30S subunits but not for 70S ribosomes. In Acidothermus cellulolyticus (strain ATCC 43068 / DSM 8971 / 11B), this protein is Ribosome maturation factor RimM.